A 362-amino-acid chain; its full sequence is UDP-N-acetylglucosamine--N-acetylmuramyl-(pentapeptide) pyrophosphoryl-undecaprenol N-acetylglucosamine transferase (362 aa).

UDP-N-acetyl-alpha-D-glucosamine contacts are provided by residues 14–16 (TGG), Arg170, Ser199, and Gln289.

This sequence belongs to the glycosyltransferase 28 family. MurG subfamily.

The protein resides in the cell inner membrane. The enzyme catalyses di-trans,octa-cis-undecaprenyl diphospho-N-acetyl-alpha-D-muramoyl-L-alanyl-D-glutamyl-meso-2,6-diaminopimeloyl-D-alanyl-D-alanine + UDP-N-acetyl-alpha-D-glucosamine = di-trans,octa-cis-undecaprenyl diphospho-[N-acetyl-alpha-D-glucosaminyl-(1-&gt;4)]-N-acetyl-alpha-D-muramoyl-L-alanyl-D-glutamyl-meso-2,6-diaminopimeloyl-D-alanyl-D-alanine + UDP + H(+). The protein operates within cell wall biogenesis; peptidoglycan biosynthesis. Cell wall formation. Catalyzes the transfer of a GlcNAc subunit on undecaprenyl-pyrophosphoryl-MurNAc-pentapeptide (lipid intermediate I) to form undecaprenyl-pyrophosphoryl-MurNAc-(pentapeptide)GlcNAc (lipid intermediate II). This Borrelia turicatae (strain 91E135) protein is UDP-N-acetylglucosamine--N-acetylmuramyl-(pentapeptide) pyrophosphoryl-undecaprenol N-acetylglucosamine transferase.